The primary structure comprises 222 residues: Small ribosomal subunit protein uS7m (222 aa).

This sequence belongs to the universal ribosomal protein uS7 family. In terms of assembly, part of the small ribosomal subunit.

The protein resides in the mitochondrion. Functionally, one of the primary rRNA binding proteins, it binds directly to 18S rRNA where it nucleates assembly of the head domain of the small subunit. This Prototheca wickerhamii protein is Small ribosomal subunit protein uS7m (RPS7).